Consider the following 197-residue polypeptide: MNLIPTVIEQTSRGERAYDIYSRLLKDRIILLGSAIDDNVANSIVAQLLFLQAEDPDKDISLYINSPGGSITAGMAIYDTMQIIKPKVQTICIGMAASMGAFLLAAGEPGKRFALPNAEVMIHQPLGGAQGQATEIEIAAKRILFLREKLNGILSERTGQPLEVIARDTDRDNFMTAERAKEYGLIDHIMHRSTDNK.

S98 (nucleophile) is an active-site residue. The active site involves H123.

Belongs to the peptidase S14 family. In terms of assembly, fourteen ClpP subunits assemble into 2 heptameric rings which stack back to back to give a disk-like structure with a central cavity, resembling the structure of eukaryotic proteasomes.

The protein localises to the cytoplasm. The enzyme catalyses Hydrolysis of proteins to small peptides in the presence of ATP and magnesium. alpha-casein is the usual test substrate. In the absence of ATP, only oligopeptides shorter than five residues are hydrolyzed (such as succinyl-Leu-Tyr-|-NHMec, and Leu-Tyr-Leu-|-Tyr-Trp, in which cleavage of the -Tyr-|-Leu- and -Tyr-|-Trp bonds also occurs).. Functionally, cleaves peptides in various proteins in a process that requires ATP hydrolysis. Has a chymotrypsin-like activity. Plays a major role in the degradation of misfolded proteins. This Lysinibacillus sphaericus (strain C3-41) protein is ATP-dependent Clp protease proteolytic subunit.